Consider the following 475-residue polypeptide: Ribulose bisphosphate carboxylase large chain (475 aa).

A propeptide spanning residues 1–2 is cleaved from the precursor; sequence MS. Residue proline 3 is modified to N-acetylproline. Residue lysine 14 is modified to N6,N6,N6-trimethyllysine. Substrate contacts are provided by asparagine 123 and threonine 173. Lysine 175 functions as the Proton acceptor in the catalytic mechanism. Lysine 177 is a binding site for substrate. Residues lysine 201, aspartate 203, and glutamate 204 each coordinate Mg(2+). Residue lysine 201 is modified to N6-carboxylysine. Histidine 294 serves as the catalytic Proton acceptor. The substrate site is built by arginine 295, histidine 327, and serine 379.

Belongs to the RuBisCO large chain family. Type I subfamily. Heterohexadecamer of 8 large chains and 8 small chains; disulfide-linked. The disulfide link is formed within the large subunit homodimers. Requires Mg(2+) as cofactor. Post-translationally, the disulfide bond which can form in the large chain dimeric partners within the hexadecamer appears to be associated with oxidative stress and protein turnover.

The protein localises to the plastid. It is found in the chloroplast. It carries out the reaction 2 (2R)-3-phosphoglycerate + 2 H(+) = D-ribulose 1,5-bisphosphate + CO2 + H2O. The enzyme catalyses D-ribulose 1,5-bisphosphate + O2 = 2-phosphoglycolate + (2R)-3-phosphoglycerate + 2 H(+). Its function is as follows. RuBisCO catalyzes two reactions: the carboxylation of D-ribulose 1,5-bisphosphate, the primary event in carbon dioxide fixation, as well as the oxidative fragmentation of the pentose substrate in the photorespiration process. Both reactions occur simultaneously and in competition at the same active site. In Pinus radiata (Monterey pine), this protein is Ribulose bisphosphate carboxylase large chain.